Here is a 396-residue protein sequence, read N- to C-terminus: Cystathionine beta-lyase (396 aa).

Lys214 carries the N6-(pyridoxal phosphate)lysine modification.

The protein belongs to the trans-sulfuration enzymes family. Homodimer. The cofactor is pyridoxal 5'-phosphate.

It is found in the cytoplasm. It catalyses the reaction L,L-cystathionine + H2O = L-homocysteine + pyruvate + NH4(+). The enzyme catalyses an S-substituted L-cysteine + H2O = a thiol + pyruvate + NH4(+). It participates in amino-acid biosynthesis; L-methionine biosynthesis via de novo pathway; L-homocysteine from L-cystathionine: step 1/1. Functionally, catalyzes the cleavage of cystathionine to homocysteine, pyruvate and ammonia during methionine biosynthesis. Also has cytotoxic activity toward osteogenic, osteosarcoma and tracheal cells, in vitro. The chemical basis for cell toxicity might be the formation and subsequent transfer of sulfane-sulfur to proteins, derived via beta-cystathionase cleavage of L-cystine. This is Cystathionine beta-lyase (metC) from Bordetella avium.